Consider the following 236-residue polypeptide: MNSLSFLNHEFEAFPSPELALTDPNGLLAIGGDLRPERLLTAYYHGIFPWFNADDPILWWSPDPRAIFIPGQVNISTSLRKYLKKQPWRFTINHAFTDVMAGCAQPRRKQAGTWITHEIQMAYRELHHNGHAHSVEVWHGERLIGGLYGIAIGQVFCGESMFHRETNASKAAMAVLQQHLIKMNFKLIDAQVMNPHLESLGAKPVKRADFIQLLTQFRDKPVNPAAWIPSEVTLEL.

It belongs to the L/F-transferase family.

Its subcellular location is the cytoplasm. It carries out the reaction N-terminal L-lysyl-[protein] + L-leucyl-tRNA(Leu) = N-terminal L-leucyl-L-lysyl-[protein] + tRNA(Leu) + H(+). The catalysed reaction is N-terminal L-arginyl-[protein] + L-leucyl-tRNA(Leu) = N-terminal L-leucyl-L-arginyl-[protein] + tRNA(Leu) + H(+). It catalyses the reaction L-phenylalanyl-tRNA(Phe) + an N-terminal L-alpha-aminoacyl-[protein] = an N-terminal L-phenylalanyl-L-alpha-aminoacyl-[protein] + tRNA(Phe). In terms of biological role, functions in the N-end rule pathway of protein degradation where it conjugates Leu, Phe and, less efficiently, Met from aminoacyl-tRNAs to the N-termini of proteins containing an N-terminal arginine or lysine. The sequence is that of Leucyl/phenylalanyl-tRNA--protein transferase from Shewanella sp. (strain ANA-3).